The sequence spans 31 residues: uncharacterized protein (31 aa).

This is an uncharacterized protein from Caenorhabditis elegans.